Consider the following 276-residue polypeptide: NADPH-dependent 7-cyano-7-deazaguanine reductase (276 aa).

83–85 (IES) lines the substrate pocket. 85-86 (SK) is an NADPH binding site. Cys184 acts as the Thioimide intermediate in catalysis. The active-site Proton donor is the Asp191. 223–224 (HE) serves as a coordination point for substrate. NADPH is bound at residue 252–253 (RG).

This sequence belongs to the GTP cyclohydrolase I family. QueF type 2 subfamily. As to quaternary structure, homodimer.

It is found in the cytoplasm. It catalyses the reaction 7-aminomethyl-7-carbaguanine + 2 NADP(+) = 7-cyano-7-deazaguanine + 2 NADPH + 3 H(+). Its pathway is tRNA modification; tRNA-queuosine biosynthesis. In terms of biological role, catalyzes the NADPH-dependent reduction of 7-cyano-7-deazaguanine (preQ0) to 7-aminomethyl-7-deazaguanine (preQ1). The sequence is that of NADPH-dependent 7-cyano-7-deazaguanine reductase from Desulfotalea psychrophila (strain LSv54 / DSM 12343).